The following is a 533-amino-acid chain: MKLLAVRRLLRIQRVVIRYRLDDLILELPMLPWWLRLLGATLPWRWLPRRKLELTRGARLRLALQDLGPIFIKFGQILSTRRDLLPDDIANELAWLQDKVPPFPPELAVKRIEEQLGAKIEQVFARFEREPLASASVAQVHAARLKSGEEVVVKVIRPNLEPVIRSDIAWLFILARLAERVSSEARRLHPVEVVSDYEKTIVDELDLLREAANASQLRRNFEGSPLLYVPQVYWDWCRPKVLVMERIYGIPVTDLETLRDQRTDFKALAERGVEIFFTQVFRDSFFHADMHPGNIFVSTRAPWSPQYIAVDCGIVGSLTDEDQDYLARNLIAFFKRDYRKVAQLHIDSGWVPAETKVNDFEAAIRTVCEPIFEKPLKDISFGQVLLRLFQTARRFNMEIQPQLVLLQKTLLNIEGLGRQLYPELDLWATAQPFLERWMRERVSPKQLLRNFQQQVEQVPHLSQMARDTLERLSQPHAHNTPPPEWKGSRHDWLGRLVGAVLLVGAAEVGLGQQLEAWPAWVMLAGGVFLILRR.

A helical transmembrane segment spans residues 24–44 (LILELPMLPWWLRLLGATLPW). The 369-residue stretch at 126–494 (RFEREPLASA…WKGSRHDWLG (369 aa)) folds into the Protein kinase domain. ATP is bound by residues 132 to 140 (LASASVAQV) and lysine 154. The active-site Proton acceptor is the aspartate 289. Residues 510 to 530 (LGQQLEAWPAWVMLAGGVFLI) traverse the membrane as a helical segment.

The protein belongs to the ABC1 family. UbiB subfamily.

The protein localises to the cell inner membrane. It functions in the pathway cofactor biosynthesis; ubiquinone biosynthesis [regulation]. In terms of biological role, is probably a protein kinase regulator of UbiI activity which is involved in aerobic coenzyme Q (ubiquinone) biosynthesis. This Pseudomonas aeruginosa (strain LESB58) protein is Probable protein kinase UbiB.